A 557-amino-acid polypeptide reads, in one-letter code: Jerky protein (557 aa).

The HTH psq-type domain maps to K11 to L62. DNA-binding regions (H-T-H motif) lie at residues R38–H58 and P110–R142. One can recognise an HTH CENPB-type domain in the interval Q77–D149. The region spanning K213–W382 is the DDE-1 domain.

This sequence belongs to the tigger transposable element derived protein family. As to expression, brain; highest in the temporal and brainstem regions.

It is found in the nucleus. In terms of biological role, may bind DNA. The polypeptide is Jerky protein (Mus musculus (Mouse)).